Here is a 200-residue protein sequence, read N- to C-terminus: Inner membrane-spanning protein YciB (200 aa).

The next 6 helical transmembrane spans lie at His7 to Ala27, Phe32 to Val52, Ile56 to Val76, Leu93 to Phe113, Ile126 to Trp146, and Phe153 to Gln173.

It belongs to the YciB family.

The protein resides in the cell inner membrane. Plays a role in cell envelope biogenesis, maintenance of cell envelope integrity and membrane homeostasis. The sequence is that of Inner membrane-spanning protein YciB from Bradyrhizobium sp. (strain ORS 278).